The following is a 187-amino-acid chain: Inosine triphosphate pyrophosphatase (187 aa).

11–16 contacts ITP; the sequence is TSNKNK. Position 39 (Glu-39) interacts with Mg(2+). ITP-binding positions include Lys-51, 67 to 68, Lys-84, 143 to 146, Lys-164, and 169 to 170; these read DT, FGWD, and HR.

The protein belongs to the HAM1 NTPase family. Homodimer. Mg(2+) is required as a cofactor. The cofactor is Mn(2+).

The protein resides in the cytoplasm. The protein localises to the nucleus. It carries out the reaction ITP + H2O = IMP + diphosphate + H(+). The catalysed reaction is dITP + H2O = dIMP + diphosphate + H(+). It catalyses the reaction XTP + H2O = XMP + diphosphate + H(+). Its function is as follows. Pyrophosphatase that hydrolyzes non-canonical purine nucleotides such as inosine triphosphate (ITP), deoxyinosine triphosphate (dITP) or xanthosine 5'-triphosphate (XTP) to their respective monophosphate derivatives. The enzyme does not distinguish between the deoxy- and ribose forms. Probably excludes non-canonical purines from RNA and DNA precursor pools, thus preventing their incorporation into RNA and DNA and avoiding chromosomal lesions. This Aspergillus fumigatus (strain ATCC MYA-4609 / CBS 101355 / FGSC A1100 / Af293) (Neosartorya fumigata) protein is Inosine triphosphate pyrophosphatase.